Here is a 52-residue protein sequence, read N- to C-terminus: Dibenzothiophene metabolism operon protein NahQ/DoxH (52 aa).

Its pathway is aromatic compound metabolism; naphthalene degradation. Functionally, may be involved in the conversion of 2-hydroxy-4-(2'-oxo-3,5-cyclohexadienyl)-buta-2,4-dienoate to cis-O-hydroxybenzylidenepyruvate. DoxH and DoxJ encode different enzymes that may have interchangeable functions. In Pseudomonas putida (Arthrobacter siderocapsulatus), this protein is Dibenzothiophene metabolism operon protein NahQ/DoxH (nahQ).